We begin with the raw amino-acid sequence, 433 residues long: Glutamate-1-semialdehyde 2,1-aminomutase (433 aa).

Lysine 270 carries the N6-(pyridoxal phosphate)lysine modification.

Belongs to the class-III pyridoxal-phosphate-dependent aminotransferase family. HemL subfamily. Homodimer. Pyridoxal 5'-phosphate is required as a cofactor.

Its subcellular location is the cytoplasm. It catalyses the reaction (S)-4-amino-5-oxopentanoate = 5-aminolevulinate. It functions in the pathway porphyrin-containing compound metabolism; protoporphyrin-IX biosynthesis; 5-aminolevulinate from L-glutamyl-tRNA(Glu): step 2/2. The protein is Glutamate-1-semialdehyde 2,1-aminomutase of Clostridium novyi (strain NT).